A 919-amino-acid polypeptide reads, in one-letter code: Sarcosine dehydrogenase, mitochondrial (919 aa).

A mitochondrion-targeting transit peptide spans M1 to N22. Residue K38 is modified to N6-succinyllysine. Tele-8alpha-FAD histidine is present on H109. N6-acetyllysine; alternate is present on K174. Residue K174 is modified to N6-succinyllysine; alternate. Residues K278, K378, K392, and K535 each carry the N6-succinyllysine modification. Residues K560 and K776 each carry the N6-acetyllysine modification. Y778 is subject to Phosphotyrosine. Residues K803, K885, and K905 each carry the N6-acetyllysine; alternate modification. N6-succinyllysine; alternate occurs at positions 803, 885, and 905.

The protein belongs to the GcvT family. The cofactor is FAD.

It is found in the mitochondrion matrix. It catalyses the reaction (6S)-5,6,7,8-tetrahydrofolyl-(gamma-L-Glu)(n) + sarcosine + oxidized [electron-transfer flavoprotein] + H(+) = (6R)-5,10-methylenetetrahydrofolyl-(gamma-L-Glu)(n) + reduced [electron-transfer flavoprotein] + glycine. The protein operates within amine and polyamine degradation; sarcosine degradation; formaldehyde and glycine from sarcosine: step 1/1. Its function is as follows. Catalyzes the last step of the oxidative degradation of choline to glycine. Converts sarcosine into glycine. This chain is Sarcosine dehydrogenase, mitochondrial, found in Mus musculus (Mouse).